The primary structure comprises 575 residues: DNA polymerase lambda (575 aa).

In terms of domain architecture, BRCT spans 36 to 132 (EAEEWLSSLR…RLVDVAGFSI (97 aa)). The disordered stretch occupies residues 160–205 (ALLQTALPPPPSPTRPVSPPQKTKEAPNTQAQPISDDEASDGEETQ). A compositionally biased stretch (pro residues) spans 166–178 (LPPPPSPTRPVSP). Residues 194 to 203 (SDDEASDGEE) show a composition bias toward acidic residues. Residues 265 to 279 (KAYSVQGDKWRALGY) are DNA-binding. Catalysis depends on Lys312, which acts as the Schiff-base intermediate with DNA. The segment at 345-348 (GTKT) is DNA-binding. DCTP contacts are provided by residues Arg386, 417–420 (SYRR), and 426–429 (GDVD). The tract at residues 420–429 (RGKATCGDVD) is involved in primer binding. Asp427, Asp429, and Asp490 together coordinate Mn(2+). The interval 466–505 (ENGQQQKYLGVCRLPGPGWRHRRLDIIVVPYSEFACALLY) is DNA-binding. Residue Asn513 coordinates dCTP.

The protein belongs to the DNA polymerase type-X family. As to quaternary structure, interacts with PCNA. Interacts with PAXX; promoting POLL recruitment to double-strand breaks (DSBs) and stimulation of the end-filling activity of POLL. Interacts with XRCC4; promoting POLL recruitment to double-strand breaks (DSBs) and stimulation of the end-filling activity of POLL. Interacts with NHEJ1/XLF; promoting POLL recruitment to double-strand breaks (DSBs) and stimulation of the end-filling activity of POLL. Mn(2+) serves as cofactor.

It localises to the nucleus. The enzyme catalyses DNA(n) + a 2'-deoxyribonucleoside 5'-triphosphate = DNA(n+1) + diphosphate. Functionally, DNA polymerase that functions in several pathways of DNA repair. Involved in base excision repair (BER) responsible for repair of lesions that give rise to abasic (AP) sites in DNA. Also contributes to DNA double-strand break repair by non-homologous end joining and homologous recombination. Has both template-dependent and template-independent (terminal transferase) DNA polymerase activities. Also has a 5'-deoxyribose-5-phosphate lyase (dRP lyase) activity. In Macaca fascicularis (Crab-eating macaque), this protein is DNA polymerase lambda.